A 277-amino-acid chain; its full sequence is MSTLPIRTVFFISDGTGITAETLGHSLLAQFPEARIRQVRAPFIDDLDKAIDCANQIREAARNDGVRPIVFSTLVSPETVEALHKADALFLDLFDRFIGPLETELGQRSTHTVGRFHGIADSLDYKNRIEAINFAMAHDDGVSSDGELAEADVILVGVSRSGKTPTSLYLAMQFGVKAANYPLIPEDFERNKLPGELHNYRGKLFGLTIAPERLSQIRQERRPNSRYASLDNCKYEIDAAQKLMRRENIRWLDSTTKSIEEISATILQSVRLNRPGY.

Residue 157–164 (GVSRSGKT) coordinates ADP.

This sequence belongs to the pyruvate, phosphate/water dikinase regulatory protein family. PSRP subfamily.

It catalyses the reaction [pyruvate, water dikinase] + ADP = [pyruvate, water dikinase]-phosphate + AMP + H(+). It carries out the reaction [pyruvate, water dikinase]-phosphate + phosphate + H(+) = [pyruvate, water dikinase] + diphosphate. In terms of biological role, bifunctional serine/threonine kinase and phosphorylase involved in the regulation of the phosphoenolpyruvate synthase (PEPS) by catalyzing its phosphorylation/dephosphorylation. This Azoarcus sp. (strain BH72) protein is Putative phosphoenolpyruvate synthase regulatory protein.